The chain runs to 175 residues: uncharacterized protein (175 aa).

This sequence belongs to the asfivirus B175L family.

This is an uncharacterized protein from Ornithodoros (relapsing fever ticks).